Here is a 281-residue protein sequence, read N- to C-terminus: NADPH-dependent 7-cyano-7-deazaguanine reductase (281 aa).

87–89 lines the substrate pocket; the sequence is VES. 89 to 90 lines the NADPH pocket; it reads SK. The active-site Thioimide intermediate is Cys188. Catalysis depends on Asp195, which acts as the Proton donor. 227 to 228 lines the substrate pocket; sequence HE. Position 256-257 (256-257) interacts with NADPH; it reads RG.

This sequence belongs to the GTP cyclohydrolase I family. QueF type 2 subfamily. Homodimer.

It localises to the cytoplasm. The catalysed reaction is 7-aminomethyl-7-carbaguanine + 2 NADP(+) = 7-cyano-7-deazaguanine + 2 NADPH + 3 H(+). Its pathway is tRNA modification; tRNA-queuosine biosynthesis. Its function is as follows. Catalyzes the NADPH-dependent reduction of 7-cyano-7-deazaguanine (preQ0) to 7-aminomethyl-7-deazaguanine (preQ1). In Aliivibrio fischeri (strain ATCC 700601 / ES114) (Vibrio fischeri), this protein is NADPH-dependent 7-cyano-7-deazaguanine reductase.